The primary structure comprises 501 residues: DEAD-box ATP-dependent RNA helicase 36 (501 aa).

The tract at residues 1 to 68 is disordered; it reads MEVDGEARPF…AAAVTEHAGD (68 aa). Residues 36-46 show a composition bias toward pro residues; sequence EEPPNPSPSPA. Over residues 59 to 68 the composition is skewed to low complexity; sequence AAAVTEHAGD. The Q motif motif lies at 77-105; the sequence is STFAELGLSQWLVDVCDSLGMRVPTAVQR. One can recognise a Helicase ATP-binding domain in the interval 108–281; that stretch reads IPRALEGRDV…ELSGNNSYFF (174 aa). ATP is bound at residue 121-128; that stretch reads AETGSGKT. Residues 229 to 232 carry the DEAD box motif; the sequence is DEAD. The Helicase C-terminal domain maps to 292–456; sequence TLKQLYIHVP…AYDGEMRDVN (165 aa). Over residues 473 to 486 the composition is skewed to basic and acidic residues; it reads MADEGHEDKVQARK. The segment at 473–501 is disordered; sequence MADEGHEDKVQARKEQKKRAQERKRKHDE. Positions 475–501 form a coiled coil; it reads DEGHEDKVQARKEQKKRAQERKRKHDE. Residues 487–501 are compositionally biased toward basic residues; that stretch reads EQKKRAQERKRKHDE.

It belongs to the DEAD box helicase family. DDX49/DBP8 subfamily.

The enzyme catalyses ATP + H2O = ADP + phosphate + H(+). The chain is DEAD-box ATP-dependent RNA helicase 36 from Oryza sativa subsp. japonica (Rice).